The primary structure comprises 97 residues: RxLR effector protein CRE10 (97 aa).

An N-terminal signal peptide occupies residues Met-1–Ala-21. Residues Arg-48–Arg-66 carry the RxLR-dEER motif.

The protein belongs to the RxLR effector family.

Its subcellular location is the secreted. The protein localises to the host cell. Functionally, effector that is involved in host plant infection. Contributes to virulence during the early infection stage, by inhibiting plant defense responses induced by both PAMP-triggered immunity (PTI) and effector-triggered immunity (ETI). This Phytophthora infestans (strain T30-4) (Potato late blight agent) protein is RxLR effector protein CRE10.